Consider the following 167-residue polypeptide: UPF0114 protein in repA1-repA2 intergenic region (167 aa).

A run of 3 helical transmembrane segments spans residues 15-35 (LMFP…LKFF), 53-73 (LVLI…LVMV), and 136-156 (IILC…MAYI).

This sequence belongs to the UPF0114 family.

It localises to the cell membrane. This is UPF0114 protein in repA1-repA2 intergenic region from Buchnera aphidicola subsp. Pterocomma populeum.